The chain runs to 164 residues: Pathogenesis-related protein PRB1-2 (164 aa).

Positions 1–24 (MQTPKLAILLALAMAAAMVNLSQA) are cleaved as a signal peptide. Gln-25 bears the Pyrrolidone carboxylic acid mark. One can recognise an SCP domain in the interval 34-152 (PHNAARSAVG…NRGVFITCNY (119 aa)). 3 disulfide bridges follow: Cys-68–Cys-140, Cys-113–Cys-119, and Cys-135–Cys-150.

It belongs to the CRISP family.

Probably involved in the defense reaction of plants against pathogens. In Hordeum vulgare (Barley), this protein is Pathogenesis-related protein PRB1-2.